Reading from the N-terminus, the 515-residue chain is Chromosomal replication initiator protein DnaA (515 aa).

Positions Met1–Leu89 are domain I, interacts with DnaA modulators. A domain II region spans residues Leu89–Ser172. Disordered stretches follow at residues Gln90–Ala130 and Pro142–Thr171. Low complexity-rich tracts occupy residues Ser102–Pro114 and Pro143–Pro160. The segment at Arg173 to Ala389 is domain III, AAA+ region. The ATP site is built by Gly217, Gly219, Lys220, and Thr221. The interval Ser390–Ala515 is domain IV, binds dsDNA.

Belongs to the DnaA family. As to quaternary structure, oligomerizes as a right-handed, spiral filament on DNA at oriC.

The protein resides in the cytoplasm. Functionally, plays an essential role in the initiation and regulation of chromosomal replication. ATP-DnaA binds to the origin of replication (oriC) to initiate formation of the DNA replication initiation complex once per cell cycle. Binds the DnaA box (a 9 base pair repeat at the origin) and separates the double-stranded (ds)DNA. Forms a right-handed helical filament on oriC DNA; dsDNA binds to the exterior of the filament while single-stranded (ss)DNA is stabiized in the filament's interior. The ATP-DnaA-oriC complex binds and stabilizes one strand of the AT-rich DNA unwinding element (DUE), permitting loading of DNA polymerase. After initiation quickly degrades to an ADP-DnaA complex that is not apt for DNA replication. Binds acidic phospholipids. In Micrococcus luteus (strain ATCC 4698 / DSM 20030 / JCM 1464 / CCM 169 / CCUG 5858 / IAM 1056 / NBRC 3333 / NCIMB 9278 / NCTC 2665 / VKM Ac-2230) (Micrococcus lysodeikticus), this protein is Chromosomal replication initiator protein DnaA.